Here is a 179-residue protein sequence, read N- to C-terminus: Ribosomal-protein-serine acetyltransferase (179 aa).

The 162-residue stretch at 11-172 (LELHAVAENH…NDAYDDVNLY (162 aa)) folds into the N-acetyltransferase domain.

It belongs to the acetyltransferase family. RimL subfamily.

The protein resides in the cytoplasm. The catalysed reaction is N-terminal L-seryl-[ribosomal protein bL12] + acetyl-CoA = N-terminal N(alpha)-acetyl-L-seryl-[ribosomal protein bL12] + CoA + H(+). In terms of biological role, this enzyme acetylates the N-terminal serine of ribosomal protein bL12, converting it into the acetylated form of bL12 known as bL7. This chain is Ribosomal-protein-serine acetyltransferase, found in Escherichia coli (strain K12).